We begin with the raw amino-acid sequence, 288 residues long: 33 kDa chaperonin (288 aa).

Disulfide bonds link Cys-235–Cys-237 and Cys-268–Cys-271.

This sequence belongs to the HSP33 family. Post-translationally, under oxidizing conditions two disulfide bonds are formed involving the reactive cysteines. Under reducing conditions zinc is bound to the reactive cysteines and the protein is inactive.

The protein localises to the cytoplasm. In terms of biological role, redox regulated molecular chaperone. Protects both thermally unfolding and oxidatively damaged proteins from irreversible aggregation. Plays an important role in the bacterial defense system toward oxidative stress. The chain is 33 kDa chaperonin from Streptococcus thermophilus (strain ATCC BAA-250 / LMG 18311).